A 465-amino-acid chain; its full sequence is Chaperone protein dnaJ C76, chloroplastic (465 aa).

A chloroplast-targeting transit peptide spans 1–38 (MTPAIFSPTTLPPSTATWPCSTSQKLITVRSPLKFKCR). Positions 50 to 113 (DLYDLLGIDR…ISRQAYDKEQ (64 aa)) constitute a J domain. The tract at residues 346–385 (AALPSSGNNNGSKASSNPQVTRKTFPSEEKPTSRRENRRQ) is disordered. Low complexity predominate over residues 350-362 (SSGNNNGSKASSN). The segment covering 370–384 (FPSEEKPTSRRENRR) has biased composition (basic and acidic residues).

It belongs to the DnaJ family. Expressed in roots, exclusively in the stele.

It localises to the plastid. The protein resides in the chloroplast. In terms of biological role, may function together with HSC70 chaperone to assist protein folding and prevent protein aggregation during salt stress in the chloroplast. Involved in root development. Required for the position-dependent cell fate determination during root hair development. This is Chaperone protein dnaJ C76, chloroplastic from Arabidopsis thaliana (Mouse-ear cress).